Reading from the N-terminus, the 31-residue chain is Cliotide T14 (31 aa).

Positions 1–31 (DTIPCGESCVWIPCISSILGCSCKDKVCYHN) form a cross-link, cyclopeptide (Asp-Asn). 3 disulfide bridges follow: Cys5/Cys21, Cys9/Cys23, and Cys14/Cys28.

Post-translationally, contains 3 disulfide bonds. This is a cyclic peptide. In terms of tissue distribution, expressed in seed but not in root nodules.

Functionally, probably participates in a plant defense mechanism. Not active against Gram-negative bacterium E.coli ATCC 700926 or Gram-positive bacterium S.aureus ATCC 12600 up to a concentration of 100 uM under low-salt conditions. This chain is Cliotide T14, found in Clitoria ternatea (Butterfly pea).